Reading from the N-terminus, the 615-residue chain is 1-deoxy-D-xylulose-5-phosphate synthase (615 aa).

Residues His-72 and 113–115 (GHA) each bind thiamine diphosphate. Asp-144 is a Mg(2+) binding site. Thiamine diphosphate contacts are provided by residues 145–146 (GA), Asn-173, Tyr-281, and Glu-360. Position 173 (Asn-173) interacts with Mg(2+).

It belongs to the transketolase family. DXPS subfamily. As to quaternary structure, homodimer. The cofactor is Mg(2+). Requires thiamine diphosphate as cofactor.

The catalysed reaction is D-glyceraldehyde 3-phosphate + pyruvate + H(+) = 1-deoxy-D-xylulose 5-phosphate + CO2. It functions in the pathway metabolic intermediate biosynthesis; 1-deoxy-D-xylulose 5-phosphate biosynthesis; 1-deoxy-D-xylulose 5-phosphate from D-glyceraldehyde 3-phosphate and pyruvate: step 1/1. Functionally, catalyzes the acyloin condensation reaction between C atoms 2 and 3 of pyruvate and glyceraldehyde 3-phosphate to yield 1-deoxy-D-xylulose-5-phosphate (DXP). This Thermus thermophilus (strain ATCC BAA-163 / DSM 7039 / HB27) protein is 1-deoxy-D-xylulose-5-phosphate synthase.